The chain runs to 550 residues: Transcriptional repressor RHIT (550 aa).

3 disordered regions span residues 1–67 (MSAD…ETRA), 174–200 (VQGKGEAPGSSRQLGHEEEEKRGVVEV), and 216–296 (KSFK…EGLA). Basic and acidic residues-rich tracts occupy residues 11-22 (AQDKERARETPG), 45-58 (ESPHIKMEPEEPHP), and 187-200 (LGHEEEEKRGVVEV). The KRAB domain occupies 124–193 (VTFEDMALYL…SRQLGHEEEE (70 aa)). Lys-216 participates in a covalent cross-link: Glycyl lysine isopeptide (Lys-Gly) (interchain with G-Cter in SUMO2). Positions 267 to 281 (DLPKTQEGHFPEQPR) are enriched in basic and acidic residues. The residue at position 290 (Ser-290) is a Phosphoserine. C2H2-type zinc fingers lie at residues 306–328 (YKCEQCGKAFSWHSHLVTHRRTH), 334–356 (YACTDCGKRFGRSSHLIQHQIIH), 362–384 (YTCPSCWKSFSHHSTLIQHQRIH), 390–412 (YVCDRCAKRFTRRSDLVTHQGTH), 418–440 (HKCPICGKCFTQSSALVTHQRTH), 446–468 (YPCPECGKCFSQRSNLIAHNRTH), 474–496 (YHCLDCGKSFSHSSHLTAHQRTH), and 502–524 (YSCPLCGKSFSRRSNLHRHEKIH).

Belongs to the krueppel C2H2-type zinc-finger protein family.

Its subcellular location is the nucleus. Transcriptional repressor involved in regulating MPV17L expression. By regulating MPV17L expression, contributes to the regulation of genes involved in H(2)O(2) metabolism and the mitochondrial apoptotic cascade. The chain is Transcriptional repressor RHIT (ZNF205) from Bos taurus (Bovine).